A 365-amino-acid chain; its full sequence is Ribosomal RNA large subunit methyltransferase M (365 aa).

Residues Ser188, 221-224 (CPGG), Asp240, Asp260, and Asp277 contribute to the S-adenosyl-L-methionine site. The active-site Proton acceptor is the Lys306.

The protein belongs to the class I-like SAM-binding methyltransferase superfamily. RNA methyltransferase RlmE family. RlmM subfamily. In terms of assembly, monomer.

It is found in the cytoplasm. The enzyme catalyses cytidine(2498) in 23S rRNA + S-adenosyl-L-methionine = 2'-O-methylcytidine(2498) in 23S rRNA + S-adenosyl-L-homocysteine + H(+). In terms of biological role, catalyzes the 2'-O-methylation at nucleotide C2498 in 23S rRNA. This chain is Ribosomal RNA large subunit methyltransferase M, found in Proteus mirabilis (strain HI4320).